The chain runs to 62 residues: Large ribosomal subunit protein uL29 (62 aa).

The protein belongs to the universal ribosomal protein uL29 family.

This Helicobacter hepaticus (strain ATCC 51449 / 3B1) protein is Large ribosomal subunit protein uL29.